The sequence spans 151 residues: C-C motif chemokine 25 (151 aa).

Positions 1–22 (MNLWLLVCLVASLMGAWSTVHT) are cleaved as a signal peptide. Intrachain disulfides connect Cys29–Cys57 and Cys30–Cys73. Residues 94-151 (THSKQHLGSRRNLQDSHLGGQRSNTGMSRLAHSKSKSSRSTRSNKKKTSFLNMANPGP) form a disordered region. A compositionally biased stretch (basic residues) spans 124-141 (AHSKSKSSRSTRSNKKKT).

The protein belongs to the intercrine beta (chemokine CC) family.

It localises to the secreted. Functionally, potentially involved in T-cell development. Recombinant protein shows chemotactic activity on thymocytes, macrophages, THP-1 cells, and dendritics cells but is inactive on peripheral blood lymphocytes and neutrophils. Binds to CCR9. Binds to atypical chemokine receptor ACKR4 and mediates the recruitment of beta-arrestin (ARRB1/2) to ACKR4. In Canis lupus familiaris (Dog), this protein is C-C motif chemokine 25 (CCL25).